Consider the following 301-residue polypeptide: Acetyl-coenzyme A carboxylase carboxyl transferase subunit beta (301 aa).

The region spanning 29-298 (LWVKCPETGQ…AEPAEEEAEP (270 aa)) is the CoA carboxyltransferase N-terminal domain.

The protein belongs to the AccD/PCCB family. As to quaternary structure, acetyl-CoA carboxylase is a heterohexamer composed of biotin carboxyl carrier protein (AccB), biotin carboxylase (AccC) and two subunits each of ACCase subunit alpha (AccA) and ACCase subunit beta (AccD).

Its subcellular location is the cytoplasm. It catalyses the reaction N(6)-carboxybiotinyl-L-lysyl-[protein] + acetyl-CoA = N(6)-biotinyl-L-lysyl-[protein] + malonyl-CoA. The protein operates within lipid metabolism; malonyl-CoA biosynthesis; malonyl-CoA from acetyl-CoA: step 1/1. Functionally, component of the acetyl coenzyme A carboxylase (ACC) complex. Biotin carboxylase (BC) catalyzes the carboxylation of biotin on its carrier protein (BCCP) and then the CO(2) group is transferred by the transcarboxylase to acetyl-CoA to form malonyl-CoA. This is Acetyl-coenzyme A carboxylase carboxyl transferase subunit beta from Methylobacterium nodulans (strain LMG 21967 / CNCM I-2342 / ORS 2060).